The following is a 68-amino-acid chain: Alpha-conotoxin PIVA (68 aa).

The first 16 residues, Met-1–Ser-16, serve as a signal peptide directing secretion. Residues Phe-17–Arg-41 constitute a propeptide that is removed on maturation. 3 cysteine pairs are disulfide-bonded: Cys-43-Cys-57, Cys-44-Cys-52, and Cys-55-Cys-64. 2 positions are modified to 4-hydroxyproline; partial: Pro-48 and Pro-54. Pro-61 bears the 4-hydroxyproline mark. The residue at position 66 (Gln-66) is a Glutamine amide.

This sequence belongs to the conotoxin A superfamily. As to expression, expressed by the venom duct.

It is found in the secreted. Alpha-conotoxins act on postsynaptic membranes, they bind to the nicotinic acetylcholine receptors (nAChR) and thus inhibit them. This toxin has higher affinity for the adult subtype (alpha-1-beta-1-gamma-delta (CHRNA1-CHRNB1-CHRNG-CHRND) subunits) (IC(50)=2.3 nM) of the receptor than for the fetal subtype (alpha-1-beta-1-epsilon-delta (CHRNA1-CHRNB1-CHRND-CHRNE) subunits) (IC(50)=22 nM). This is Alpha-conotoxin PIVA from Conus purpurascens (Purple cone).